A 458-amino-acid chain; its full sequence is UDP-N-acetylmuramoylalanine--D-glutamate ligase (458 aa).

Position 124–130 (124–130 (GSDGKTT)) interacts with ATP.

This sequence belongs to the MurCDEF family.

The protein localises to the cytoplasm. It carries out the reaction UDP-N-acetyl-alpha-D-muramoyl-L-alanine + D-glutamate + ATP = UDP-N-acetyl-alpha-D-muramoyl-L-alanyl-D-glutamate + ADP + phosphate + H(+). Its pathway is cell wall biogenesis; peptidoglycan biosynthesis. Functionally, cell wall formation. Catalyzes the addition of glutamate to the nucleotide precursor UDP-N-acetylmuramoyl-L-alanine (UMA). This Clostridium kluyveri (strain NBRC 12016) protein is UDP-N-acetylmuramoylalanine--D-glutamate ligase.